We begin with the raw amino-acid sequence, 297 residues long: MSDLRQIAFYGKGGIGKSTTSQNTLAALVDLGQKILIVGCDPKADSTRLILNAKAQDTVLHLAAQEGSVEDLELEDVLKAGYKGIKCVESGGPEPGVGCAGRGVITSINFLEENGAYDDVDYVSYDVLGDVVCGGFAMPIRENKAQEIYIVMSGEMMALYAANNIAKGILKYAHSGGVRLGGLICNERQTDRELDLSEALAARLNSKLIHFVPRDNIVQHAELRKMTVIQYAPDSKQAGEYRALAEKIHANSGQGTIPTPITMEELEDMLLDFGIMKSDEQMLAELQAKESAVVAAQ.

Residue G11 to S18 coordinates ATP. Residue C99 participates in [4Fe-4S] cluster binding. At R102 the chain carries ADP-ribosylarginine; by dinitrogenase reductase ADP-ribosyltransferase. [4Fe-4S] cluster is bound at residue C133.

It belongs to the NifH/BchL/ChlL family. As to quaternary structure, homodimer. Requires [4Fe-4S] cluster as cofactor. Post-translationally, the reversible ADP-ribosylation of Arg-102 inactivates the nitrogenase reductase and regulates nitrogenase activity.

The enzyme catalyses N2 + 8 reduced [2Fe-2S]-[ferredoxin] + 16 ATP + 16 H2O = H2 + 8 oxidized [2Fe-2S]-[ferredoxin] + 2 NH4(+) + 16 ADP + 16 phosphate + 6 H(+). In terms of biological role, the key enzymatic reactions in nitrogen fixation are catalyzed by the nitrogenase complex, which has 2 components: the iron protein and the molybdenum-iron protein. The polypeptide is Nitrogenase iron protein (nifH) (Rhizobium etli).